We begin with the raw amino-acid sequence, 34 residues long: Photosystem II reaction center protein M (34 aa).

The helical transmembrane segment at 5–25 threads the bilayer; sequence ILAVIATALFVLIPTAFLLIL.

Belongs to the PsbM family. PSII is composed of 1 copy each of membrane proteins PsbA, PsbB, PsbC, PsbD, PsbE, PsbF, PsbH, PsbI, PsbJ, PsbK, PsbL, PsbM, PsbT, PsbX, PsbY, PsbZ, Psb30/Ycf12, at least 3 peripheral proteins of the oxygen-evolving complex and a large number of cofactors. It forms dimeric complexes.

The protein resides in the plastid. It localises to the chloroplast thylakoid membrane. Its function is as follows. One of the components of the core complex of photosystem II (PSII). PSII is a light-driven water:plastoquinone oxidoreductase that uses light energy to abstract electrons from H(2)O, generating O(2) and a proton gradient subsequently used for ATP formation. It consists of a core antenna complex that captures photons, and an electron transfer chain that converts photonic excitation into a charge separation. This subunit is found at the monomer-monomer interface. The chain is Photosystem II reaction center protein M from Chaetosphaeridium globosum (Charophycean green alga).